Consider the following 258-residue polypeptide: Ribosomal RNA small subunit methyltransferase A (258 aa).

S-adenosyl-L-methionine-binding residues include H13, L15, G41, D63, D87, and N106.

It belongs to the class I-like SAM-binding methyltransferase superfamily. rRNA adenine N(6)-methyltransferase family. RsmA subfamily.

The protein localises to the cytoplasm. It catalyses the reaction adenosine(1518)/adenosine(1519) in 16S rRNA + 4 S-adenosyl-L-methionine = N(6)-dimethyladenosine(1518)/N(6)-dimethyladenosine(1519) in 16S rRNA + 4 S-adenosyl-L-homocysteine + 4 H(+). Functionally, specifically dimethylates two adjacent adenosines (A1518 and A1519) in the loop of a conserved hairpin near the 3'-end of 16S rRNA in the 30S particle. May play a critical role in biogenesis of 30S subunits. This Cytophaga hutchinsonii (strain ATCC 33406 / DSM 1761 / CIP 103989 / NBRC 15051 / NCIMB 9469 / D465) protein is Ribosomal RNA small subunit methyltransferase A.